We begin with the raw amino-acid sequence, 92 residues long: Small ribosomal subunit protein uS19c (92 aa).

This sequence belongs to the universal ribosomal protein uS19 family.

The protein localises to the plastid. The protein resides in the chloroplast. Protein S19 forms a complex with S13 that binds strongly to the 16S ribosomal RNA. In Draba nemorosa (Woodland whitlowgrass), this protein is Small ribosomal subunit protein uS19c.